Here is a 455-residue protein sequence, read N- to C-terminus: Ribosomal protein uS12 methylthiotransferase RimO (455 aa).

Positions 30–140 (PTIGMVSLGC…VLDAVHGAVP (111 aa)) constitute an MTTase N-terminal domain. Residues C39, C75, C104, C171, C175, and C178 each coordinate [4Fe-4S] cluster. Residues 157-386 (LTPRHFSYLK…MEKAQAISEA (230 aa)) form the Radical SAM core domain. The 67-residue stretch at 389–455 (AAKVGRRIEV…GEYDLWGRPV (67 aa)) folds into the TRAM domain.

The protein belongs to the methylthiotransferase family. RimO subfamily. Requires [4Fe-4S] cluster as cofactor.

It is found in the cytoplasm. It catalyses the reaction L-aspartate(89)-[ribosomal protein uS12]-hydrogen + (sulfur carrier)-SH + AH2 + 2 S-adenosyl-L-methionine = 3-methylsulfanyl-L-aspartate(89)-[ribosomal protein uS12]-hydrogen + (sulfur carrier)-H + 5'-deoxyadenosine + L-methionine + A + S-adenosyl-L-homocysteine + 2 H(+). In terms of biological role, catalyzes the methylthiolation of an aspartic acid residue of ribosomal protein uS12. The sequence is that of Ribosomal protein uS12 methylthiotransferase RimO from Cereibacter sphaeroides (strain ATCC 17029 / ATH 2.4.9) (Rhodobacter sphaeroides).